The sequence spans 431 residues: Trigger factor (431 aa).

In terms of domain architecture, PPIase FKBP-type spans 165–250 (GDTVVIDFDG…IHELKRKELP (86 aa)).

The protein belongs to the FKBP-type PPIase family. Tig subfamily.

The protein localises to the cytoplasm. The catalysed reaction is [protein]-peptidylproline (omega=180) = [protein]-peptidylproline (omega=0). Its function is as follows. Involved in protein export. Acts as a chaperone by maintaining the newly synthesized protein in an open conformation. Functions as a peptidyl-prolyl cis-trans isomerase. The sequence is that of Trigger factor from Leuconostoc citreum (strain KM20).